The chain runs to 312 residues: Probable HTH-type transcriptional regulator LrhA (312 aa).

In terms of domain architecture, HTH lysR-type spans 11–68; that stretch reads LDLDLLRTFVAVADLNTFAAAAAAVCRTQSAVSQQMQRLEQLVGKELFARHGRNKLLT. The H-T-H motif DNA-binding region spans 28–47; sequence FAAAAAAVCRTQSAVSQQMQ.

The protein belongs to the LysR transcriptional regulatory family.

Its function is as follows. Not known, does not seem to act on the proton translocating NADH dehydrogenase genes (nuoA-N) which are part of the lrhA operon. This Escherichia coli (strain K12) protein is Probable HTH-type transcriptional regulator LrhA (lrhA).